The chain runs to 285 residues: Phosphatidylglycerol--prolipoprotein diacylglyceryl transferase (285 aa).

4 helical membrane passes run 30–50 (LEIR…HWHI), 67–87 (LMLW…ILLY), 103–123 (WHGG…VSIV), and 129–149 (VRVM…LFLG). Arginine 150 is a binding site for a 1,2-diacyl-sn-glycero-3-phospho-(1'-sn-glycerol). Transmembrane regions (helical) follow at residues 184–204 (SQVY…SILA), 213–233 (FGVL…AVEF), and 252–272 (GQVL…LTVL).

This sequence belongs to the Lgt family.

The protein localises to the cell inner membrane. The catalysed reaction is L-cysteinyl-[prolipoprotein] + a 1,2-diacyl-sn-glycero-3-phospho-(1'-sn-glycerol) = an S-1,2-diacyl-sn-glyceryl-L-cysteinyl-[prolipoprotein] + sn-glycerol 1-phosphate + H(+). It participates in protein modification; lipoprotein biosynthesis (diacylglyceryl transfer). Functionally, catalyzes the transfer of the diacylglyceryl group from phosphatidylglycerol to the sulfhydryl group of the N-terminal cysteine of a prolipoprotein, the first step in the formation of mature lipoproteins. This chain is Phosphatidylglycerol--prolipoprotein diacylglyceryl transferase, found in Anaplasma marginale (strain Florida).